The chain runs to 697 residues: MMRPVVVKEKQLNESQIHAVEDEVRQAKTMDRDIVTHAMKQSVAKLNPKVMIKNPIMFVVEIGFIITFILSFLPSSSSSIPGWFNITVSLILLFTVLFANFAEALAEGRGKAQADSLKQSKKDVFANVVKENGDIVQVSATDLRKGDVVIVKQGEMIPSDGEVIKGLASVDESAITGESAPVIKEAGGDFCSVTGGTMVVSDEITIVITSNPGESFIDKMISLVEGAARQKTPNEIALNTVLTSLTLIFLIVVVTLPIFTNYLGFQIDTAVLVALLVCLIPTTIGGLLSAIGIAGMDRVTKFNVLAMSGKAVEAAGDINTIILDKTGTITFGNRMAHTLLPVGNETIEQVGKWAAISSVLDETPEGRSVIEYVQGKSISYNRELAEQGEFVPFKAETRMSGVDLQDGTKVRKGAVGSVIEWVQSQGGTIPKDVNQKADFISKEGGTPLVVAVNNRIYGLIYLKDTVKPGMRERFEQLRQMGIKTVMCTGDNPLTAATIAKEAGVDEFVAECKPEDKIAVIKAEQDKGKLVAMTGDGTNDAPALAQADVGLAMNSGTTAAKEAANMIDLDSNPTKIIEVVGIGKQLLMTRGALTTFSIANDIAKYFAIIPAMFTLAIPQMEALNIMKLTSPLSAILSALIFNAVIIPLLIPLAMKGIAYKPMSSNALLSRNLLIYGLGGVIVPFIGIKVIDIIVGLFI.

A run of 4 helical transmembrane segments spans residues 55–75, 79–99, 245–265, and 271–291; these read PIMF…FLPS, SIPG…VLFA, LTLI…YLGF, and VLVA…LSAI. The active-site 4-aspartylphosphate intermediate is D324. ATP-binding positions include D361, E365, 393–400, and K412; that span reads FKAETRMS. Positions 535 and 539 each coordinate Mg(2+). A run of 3 helical transmembrane segments spans residues 605 to 625, 633 to 653, and 677 to 697; these read FAII…LNIM, AILS…PLAM, and GGVI…GLFI.

It belongs to the cation transport ATPase (P-type) (TC 3.A.3) family. Type IA subfamily. In terms of assembly, the system is composed of three essential subunits: KdpA, KdpB and KdpC.

It localises to the cell membrane. It carries out the reaction K(+)(out) + ATP + H2O = K(+)(in) + ADP + phosphate + H(+). In terms of biological role, part of the high-affinity ATP-driven potassium transport (or Kdp) system, which catalyzes the hydrolysis of ATP coupled with the electrogenic transport of potassium into the cytoplasm. This subunit is responsible for energy coupling to the transport system and for the release of the potassium ions to the cytoplasm. The polypeptide is Potassium-transporting ATPase ATP-binding subunit (Bacillus cereus (strain ATCC 14579 / DSM 31 / CCUG 7414 / JCM 2152 / NBRC 15305 / NCIMB 9373 / NCTC 2599 / NRRL B-3711)).